The primary structure comprises 906 residues: Formin-like protein 16 (906 aa).

The first 28 residues, 1 to 28 (MAPAPSPTPLPLFLLLLLLVGVAPLAAA), serve as a signal peptide directing secretion. A disordered region spans residues 34–76 (QTRFPSTRTPAFATPPPITSPSPSPGTPTATPSSSPPSSSGKR). Over residues 46–59 (ATPPPITSPSPSPG) the composition is skewed to pro residues. Low complexity predominate over residues 60-73 (TPTATPSSSPPSSS). A helical membrane pass occupies residues 81–101 (VAVVSTALSSFAVSGLAFFLF). 6 disordered regions span residues 113-149 (AGGA…VDEN), 161-223 (KEGD…SLDS), 250-404 (AYAR…DQQA), 451-474 (RKTK…GRSN), 677-702 (GSLA…REER), and 834-906 (LQQQ…SDEE). The segment covering 114–128 (GGAGQHYGGAQGGAL) has biased composition (gly residues). A compositionally biased stretch (pro residues) spans 174–185 (SRRPPQPPPPRP). Basic and acidic residues predominate over residues 186–196 (YRAERRQDAHE). Residues 270–294 (SPSPAPAPAARPASPSPSLPLPPGR) are compositionally biased toward pro residues. A compositionally biased stretch (low complexity) spans 295 to 310 (ESPSRPQSIAAAAVAS). Positions 311 to 383 (PAPPPPPPPK…KGGPPPPPPK (73 aa)) are enriched in pro residues. Positions 396–849 (PTGSADQQAK…PTPPPSSSQP (454 aa)) constitute an FH2 domain. Polar residues-rich tracts occupy residues 463–474 (GGSTSAGLGRSN) and 677–697 (GSLA…SQGP). Low complexity predominate over residues 847 to 866 (SQPAAPAATTKGAADDAPAP).

Belongs to the formin-like family. Class-I subfamily.

The protein localises to the membrane. The chain is Formin-like protein 16 (FH16) from Oryza sativa subsp. japonica (Rice).